The chain runs to 415 residues: Multidrug resistance protein MdtA (415 aa).

The first 21 residues, 1–21 (MKGSYKSRWVIVIVVVIAAIA), serve as a signal peptide directing secretion. 2 disordered regions span residues 32 to 60 (SRSA…GPLA) and 392 to 415 (EAQS…GARS). Residues 399–415 (PEEKATSREYAKKGARS) are compositionally biased toward basic and acidic residues.

Belongs to the membrane fusion protein (MFP) (TC 8.A.1) family. In terms of assembly, part of a tripartite efflux system composed of MdtA, MdtB and MdtC.

It is found in the cell inner membrane. In terms of biological role, the MdtABC tripartite complex confers resistance against novobiocin and deoxycholate. The chain is Multidrug resistance protein MdtA from Escherichia coli O81 (strain ED1a).